Here is a 102-residue protein sequence, read N- to C-terminus: Putative defensin-like protein 298 (102 aa).

Residues 1–29 (MSASKATMLILFALFLSDILLVSIPRAEA) form the signal peptide. 6 disulfide bridges follow: C35/C53, C41/C58, C46/C60, C74/C93, C80/C98, and C86/C100.

Belongs to the DEFL family.

The protein resides in the secreted. This Arabidopsis thaliana (Mouse-ear cress) protein is Putative defensin-like protein 298.